The following is a 310-amino-acid chain: Small ribosomal subunit biogenesis GTPase RsgA (310 aa).

Residues 77–236 (KNELKRPNIA…IADTPGFSKL (160 aa)) enclose the CP-type G domain. GTP contacts are provided by residues 126–129 (SKID) and 179–187 (GQTGVGKST). Zn(2+) contacts are provided by Cys-260, Cys-266, His-268, and Cys-274.

This sequence belongs to the TRAFAC class YlqF/YawG GTPase family. RsgA subfamily. Monomer. Associates with 30S ribosomal subunit, binds 16S rRNA. The cofactor is Zn(2+).

Its subcellular location is the cytoplasm. One of several proteins that assist in the late maturation steps of the functional core of the 30S ribosomal subunit. Helps release RbfA from mature subunits. May play a role in the assembly of ribosomal proteins into the subunit. Circularly permuted GTPase that catalyzes slow GTP hydrolysis, GTPase activity is stimulated by the 30S ribosomal subunit. The chain is Small ribosomal subunit biogenesis GTPase RsgA from Phytoplasma australiense.